Here is a 1081-residue protein sequence, read N- to C-terminus: Mediator of RNA polymerase II transcription subunit 15 (1081 aa).

N-acetylserine is present on Ser-2. Residues 25 to 49 (LQVLMDINTLNGGSSDTADKIRIHA) are interaction with GCN4. The tract at residues 238–286 (QAQAQANNNNNGLPQNGNINNNINIPQQQQMQPPNSSANNNPLQQQSSQ) is disordered. Ser-335 is subject to Phosphoserine. 11 repeat units span residues 422 to 423 (QA), 424 to 425 (QA), 426 to 427 (QA), 428 to 429 (QA), 430 to 431 (QA), 432 to 433 (QA), 434 to 435 (QA), 436 to 437 (QA), 438 to 439 (QA), 440 to 441 (QA), and 442 to 443 (QA). Residues 422-481 (QAQAQAQAQAQAQAQAQAQAQAAQAAQAQAQAQAQAQAQAQAQAQAQAQAQAQAQAQAQA) form a 30 X 2 AA approximate tandem repeats of Q-A region. A 12; approximate repeat occupies 444-445 (AQ). Residues 446-447 (AA) form a 13; approximate repeat. Repeat copies occupy residues 448-449 (QA), 450-451 (QA), 452-453 (QA), 454-455 (QA), 456-457 (QA), 458-459 (QA), 460-461 (QA), 462-463 (QA), 464-465 (QA), 466-467 (QA), 468-469 (QA), 470-471 (QA), 472-473 (QA), 474-475 (QA), 476-477 (QA), 478-479 (QA), and 480-481 (QA). Positions 476-497 (QAQAQAHAQHQPSQQPQQAQQQ) are enriched in low complexity. 2 disordered regions span residues 476-505 (QAQAQAHAQHQPSQQPQQAQQQPNPLHGLT) and 692-712 (QQQQQHIYPSSTPGVANYSAM). Residues Ser-736, Ser-752, Ser-783, Ser-785, and Ser-789 each carry the phosphoserine modification. The disordered stretch occupies residues 744 to 836 (PVSAAATPSL…KTVQSPMGAQ (93 aa)). A compositionally biased stretch (polar residues) spans 749 to 836 (ATPSLNKTIN…KTVQSPMGAQ (88 aa)). Thr-793 carries the post-translational modification Phosphothreonine. Phosphoserine occurs at positions 831, 1003, 1008, 1018, and 1034. Positions 1026-1055 (DSKKIKVDSPDDPFMTKSGATTSEKQEVTN) are disordered.

Belongs to the Mediator complex subunit 15 family. As to quaternary structure, component of the Mediator complex, which is composed of at least 21 subunits that form three structurally distinct submodules. The Mediator head module contains MED6, MED8, MED11, SRB4/MED17, SRB5/MED18, ROX3/MED19, SRB2/MED20 and SRB6/MED22, the middle module contains MED1, MED4, NUT1/MED5, MED7, CSE2/MED9, NUT2/MED10, SRB7/MED21 and SOH1/MED31, and the tail module contains MED2, PGD1/MED3, RGR1/MED14, GAL11/MED15 and SIN4/MED16. The head and the middle modules interact directly with RNA polymerase II, whereas the elongated tail module interacts with gene-specific regulatory proteins. GAL11/MED15 interacts with the activator GAL4; the interaction is direct. GAL11/MED15 interacts (via multiple regions) with the activator GCN4; the interaction is direct.

The protein resides in the nucleus. Component of the Mediator complex, a coactivator involved in the regulated transcription of nearly all RNA polymerase II-dependent genes. Mediator functions as a bridge to convey information from gene-specific regulatory proteins to the basal RNA polymerase II transcription machinery. The Mediator complex, having a compact conformation in its free form, is recruited to promoters by direct interactions with regulatory proteins and serves for the assembly of a functional pre-initiation complex with RNA polymerase II and the general transcription factors. The Mediator complex unfolds to an extended conformation and partially surrounds RNA polymerase II, specifically interacting with the unphosphorylated form of the C-terminal domain (CTD) of RNA polymerase II. The Mediator complex dissociates from the RNA polymerase II holoenzyme and stays at the promoter when transcriptional elongation begins. It has an important role in the negative regulation of Ty transcription. In Saccharomyces cerevisiae (strain ATCC 204508 / S288c) (Baker's yeast), this protein is Mediator of RNA polymerase II transcription subunit 15.